A 139-amino-acid polypeptide reads, in one-letter code: Putative lipoprotein LpqV (139 aa).

The signal sequence occupies residues 1 to 25 (MRPSRYAPLLCAMVLALAWLSAVAG). The N-palmitoyl cysteine moiety is linked to residue cysteine 26. Cysteine 26 is lipidated: S-diacylglycerol cysteine.

It localises to the cell membrane. This is Putative lipoprotein LpqV (lpqV) from Mycobacterium bovis (strain ATCC BAA-935 / AF2122/97).